Consider the following 982-residue polypeptide: Pentatricopeptide repeat-containing protein At5g62370 (982 aa).

PPR repeat units lie at residues 94–129 (DSSC…GIVP), 130–164 (DSSV…GYAP), 165–199 (SRNS…GSGL), 200–234 (WLWC…TRMP), 236–270 (PVNL…GYYV), 271–305 (DKVM…SFEL), 306–340 (DPCI…GVQS), 341–376 (NVFT…DISR), 377–411 (NVHC…GIVP), 412–446 (DHIT…GCGI), 476–510 (AAVG…GCTP), 511–545 (LPFS…DFVP), 546–580 (DVDT…GLRP), 581–615 (TVAI…GIQP), 616–650 (DEIA…FLRP), 651–685 (SSFT…GLSP), 686–720 (NVVL…DIKH), 721–755 (DHIA…KLLQ), 759–789 (RTKP…VKKS), 793–827 (NLYL…GIVP), 828–858 (NLVT…TNCE), 860–894 (DQVM…GINP), 895–929 (NKDS…DIWP), and 930–964 (RSIN…GRSL).

It belongs to the PPR family. P subfamily.

The chain is Pentatricopeptide repeat-containing protein At5g62370 from Arabidopsis thaliana (Mouse-ear cress).